Here is a 214-residue protein sequence, read N- to C-terminus: rRNA methyltransferase 2, mitochondrial (214 aa).

The N-terminal 18 residues, 1 to 18 (MFSTKKSQGNLHKYIQRQ), are a transit peptide targeting the mitochondrion. S-adenosyl-L-methionine contacts are provided by residues 63–66 (PGSW), Asp-83, 100–101 (DI), and Asp-125. The Proton acceptor role is filled by Lys-169.

The protein belongs to the class I-like SAM-binding methyltransferase superfamily. RNA methyltransferase RlmE family.

The protein localises to the mitochondrion. It catalyses the reaction a uridine in rRNA + S-adenosyl-L-methionine = a 2'-O-methyluridine in rRNA + S-adenosyl-L-homocysteine + H(+). Its function is as follows. S-adenosyl-L-methionine-dependent 2'-O-ribose methyltransferase that catalyzes the formation of 2'-O-methyluridine at position 808 (Um808) in the mitochondrial large subunit ribosomal RNA (mtLSU rRNA), a universally conserved modification in the peptidyl transferase domain of the mtLSU rRNA. This activity may require prior 2'-O-methylguanosine modification at position 809 (Gm809) by MRM3. Essential for late-stage assembly of mtLSU required for efficient translation of mitochondrial DNA encoded proteins; methyltransferase activity is not required for this function. Essential for mitochondrial respiratory function. The polypeptide is rRNA methyltransferase 2, mitochondrial (Caenorhabditis elegans).